The sequence spans 320 residues: Ferrochelatase (320 aa).

Fe cation-binding residues include H194 and E275.

Belongs to the ferrochelatase family. In terms of assembly, monomer.

It localises to the cytoplasm. The enzyme catalyses heme b + 2 H(+) = protoporphyrin IX + Fe(2+). It functions in the pathway porphyrin-containing compound metabolism; protoheme biosynthesis; protoheme from protoporphyrin-IX: step 1/1. Functionally, catalyzes the ferrous insertion into protoporphyrin IX. This is Ferrochelatase from Escherichia coli (strain SMS-3-5 / SECEC).